Reading from the N-terminus, the 154-residue chain is Large ribosomal subunit protein uL23 (154 aa).

The disordered stretch occupies residues 1–39 (MAPAKADPSKKSDPKAQAAKVAKAVKSGSTLKKKSQKIR). Positions 15-26 (KAQAAKVAKAVK) are enriched in low complexity.

Belongs to the universal ribosomal protein uL23 family.

In terms of biological role, this protein binds to a specific region on the 26S rRNA. In Nicotiana tabacum (Common tobacco), this protein is Large ribosomal subunit protein uL23 (RPL23A).